Reading from the N-terminus, the 195-residue chain is Glycerol-3-phosphate acyltransferase (195 aa).

The next 5 helical transmembrane spans lie at isoleucine 3 to leucine 23, alanine 53 to isoleucine 73, phenylalanine 80 to phenylalanine 100, leucine 115 to phenylalanine 135, and isoleucine 147 to alanine 167.

It belongs to the PlsY family. In terms of assembly, probably interacts with PlsX.

It is found in the cell inner membrane. It carries out the reaction an acyl phosphate + sn-glycerol 3-phosphate = a 1-acyl-sn-glycero-3-phosphate + phosphate. The protein operates within lipid metabolism; phospholipid metabolism. Its function is as follows. Catalyzes the transfer of an acyl group from acyl-phosphate (acyl-PO(4)) to glycerol-3-phosphate (G3P) to form lysophosphatidic acid (LPA). This enzyme utilizes acyl-phosphate as fatty acyl donor, but not acyl-CoA or acyl-ACP. The chain is Glycerol-3-phosphate acyltransferase from Ehrlichia chaffeensis (strain ATCC CRL-10679 / Arkansas).